The sequence spans 118 residues: Ribonuclease P protein component (118 aa).

It belongs to the RnpA family. In terms of assembly, consists of a catalytic RNA component (M1 or rnpB) and a protein subunit.

The catalysed reaction is Endonucleolytic cleavage of RNA, removing 5'-extranucleotides from tRNA precursor.. Functionally, RNaseP catalyzes the removal of the 5'-leader sequence from pre-tRNA to produce the mature 5'-terminus. It can also cleave other RNA substrates such as 4.5S RNA. The protein component plays an auxiliary but essential role in vivo by binding to the 5'-leader sequence and broadening the substrate specificity of the ribozyme. The protein is Ribonuclease P protein component of Rickettsia felis (strain ATCC VR-1525 / URRWXCal2) (Rickettsia azadi).